The primary structure comprises 466 residues: L-seryl-tRNA(Sec) selenium transferase (466 aa).

Residue lysine 294 is modified to N6-(pyridoxal phosphate)lysine.

This sequence belongs to the SelA family. It depends on pyridoxal 5'-phosphate as a cofactor.

It is found in the cytoplasm. The enzyme catalyses L-seryl-tRNA(Sec) + selenophosphate + H(+) = L-selenocysteinyl-tRNA(Sec) + phosphate. It participates in aminoacyl-tRNA biosynthesis; selenocysteinyl-tRNA(Sec) biosynthesis; selenocysteinyl-tRNA(Sec) from L-seryl-tRNA(Sec) (bacterial route): step 1/1. Functionally, converts seryl-tRNA(Sec) to selenocysteinyl-tRNA(Sec) required for selenoprotein biosynthesis. In Carboxydothermus hydrogenoformans (strain ATCC BAA-161 / DSM 6008 / Z-2901), this protein is L-seryl-tRNA(Sec) selenium transferase.